Reading from the N-terminus, the 188-residue chain is CMT1A duplicated region transcript 15 protein (188 aa).

As to expression, expressed in fetal heart, kidney, liver, lung and spleen.

The sequence is that of CMT1A duplicated region transcript 15 protein (CDRT15) from Homo sapiens (Human).